The sequence spans 536 residues: Zinc finger protein 623 (536 aa).

The disordered stretch occupies residues 57 to 77 (GELLGNPEGQSLGSSPSQDRG). The span at 64-74 (EGQSLGSSPSQ) shows a compositional bias: polar residues. 13 consecutive C2H2-type zinc fingers follow at residues 123-145 (NPCD…RISH), 151-173 (YTCD…QRIH), 179-201 (YVCN…QRVH), 207-229 (FKCA…QRVH), 235-257 (FECK…QRIH), 263-285 (YECN…YQIH), 291-313 (YECK…QRIH), 319-341 (FECN…QRIH), 347-369 (YVCN…QRIH), 375-397 (YECN…QKIH), 403-425 (YECK…QKIH), 431-453 (FECK…QIIH), and 459-481 (YVCS…QKIH). Lys-445 is covalently cross-linked (Glycyl lysine isopeptide (Lys-Gly) (interchain with G-Cter in SUMO2)). A disordered region spans residues 513 to 536 (LSLSKAPIHLGERSVDKGEHTGNL). The span at 522–536 (LGERSVDKGEHTGNL) shows a compositional bias: basic and acidic residues.

Belongs to the krueppel C2H2-type zinc-finger protein family.

It is found in the nucleus. In terms of biological role, may be involved in transcriptional regulation. This is Zinc finger protein 623 (ZNF623) from Homo sapiens (Human).